The chain runs to 606 residues: Pescadillo homolog (606 aa).

One can recognise a BRCT domain in the interval 346 to 447; the sequence is LSTSLFSPYT…KILLEGPYGQ (102 aa). Residues 461-497 are disordered; the sequence is YEGAYDPAAGPLGPSGVEQESESEADEVSEEDEEDQG. Over residues 479–496 the composition is skewed to acidic residues; that stretch reads QESESEADEVSEEDEEDQ.

It belongs to the pescadillo family. Component of the NOP7 complex, composed of ERB1, NOP7 and YTM1. The complex is held together by ERB1, which interacts with NOP7 via its N-terminal domain and with YTM1 via a high-affinity interaction between the seven-bladed beta-propeller domains of the 2 proteins. The NOP7 complex associates with the 66S pre-ribosome.

It is found in the nucleus. It localises to the nucleolus. The protein localises to the nucleoplasm. Its function is as follows. Component of the NOP7 complex, which is required for maturation of the 25S and 5.8S ribosomal RNAs and formation of the 60S ribosome. This Laccaria bicolor (strain S238N-H82 / ATCC MYA-4686) (Bicoloured deceiver) protein is Pescadillo homolog.